Reading from the N-terminus, the 310-residue chain is tRNA pseudouridine synthase B (310 aa).

Aspartate 49 acts as the Nucleophile in catalysis.

The protein belongs to the pseudouridine synthase TruB family. Type 1 subfamily.

It catalyses the reaction uridine(55) in tRNA = pseudouridine(55) in tRNA. Its function is as follows. Responsible for synthesis of pseudouridine from uracil-55 in the psi GC loop of transfer RNAs. This chain is tRNA pseudouridine synthase B, found in Sinorhizobium medicae (strain WSM419) (Ensifer medicae).